The primary structure comprises 160 residues: 2-C-methyl-D-erythritol 2,4-cyclodiphosphate synthase (160 aa).

Residues aspartate 9 and histidine 11 each coordinate a divalent metal cation. Residues 9–11 (DVH) and 35–36 (HS) contribute to the 4-CDP-2-C-methyl-D-erythritol 2-phosphate site. Histidine 43 is a binding site for a divalent metal cation. 4-CDP-2-C-methyl-D-erythritol 2-phosphate-binding positions include 57–59 (DIG), 62–66 (FPDTD), 101–107 (AQKPKMA), 133–136 (TTTE), phenylalanine 140, and arginine 143.

It belongs to the IspF family. As to quaternary structure, homotrimer. The cofactor is a divalent metal cation.

It carries out the reaction 4-CDP-2-C-methyl-D-erythritol 2-phosphate = 2-C-methyl-D-erythritol 2,4-cyclic diphosphate + CMP. It participates in isoprenoid biosynthesis; isopentenyl diphosphate biosynthesis via DXP pathway; isopentenyl diphosphate from 1-deoxy-D-xylulose 5-phosphate: step 4/6. Functionally, involved in the biosynthesis of isopentenyl diphosphate (IPP) and dimethylallyl diphosphate (DMAPP), two major building blocks of isoprenoid compounds. Catalyzes the conversion of 4-diphosphocytidyl-2-C-methyl-D-erythritol 2-phosphate (CDP-ME2P) to 2-C-methyl-D-erythritol 2,4-cyclodiphosphate (ME-CPP) with a corresponding release of cytidine 5-monophosphate (CMP). This chain is 2-C-methyl-D-erythritol 2,4-cyclodiphosphate synthase, found in Geobacillus thermodenitrificans (strain NG80-2).